Reading from the N-terminus, the 112-residue chain is 2Fe-2S ferredoxin (112 aa).

A 2Fe-2S ferredoxin-type domain is found at 5-107; that stretch reads IKVTFIVNDG…GIKVRLPSAT (103 aa). [2Fe-2S] cluster-binding residues include cysteine 42, cysteine 48, cysteine 51, and cysteine 88.

This sequence belongs to the adrenodoxin/putidaredoxin family. It depends on [2Fe-2S] cluster as a cofactor.

Functionally, ferredoxin are iron-sulfur proteins that transfer electrons in a wide variety of metabolic reactions. This chain is 2Fe-2S ferredoxin (fdxB), found in Rickettsia felis (strain ATCC VR-1525 / URRWXCal2) (Rickettsia azadi).